A 277-amino-acid chain; its full sequence is Large ribosomal subunit protein uL2m (277 aa).

A disordered region spans residues alanine 225 to arginine 263. Residues threonine 248–threonine 259 show a composition bias toward polar residues.

The protein belongs to the universal ribosomal protein uL2 family.

It is found in the mitochondrion. The sequence is that of Large ribosomal subunit protein uL2m (RPL2) from Reclinomonas americana.